Consider the following 663-residue polypeptide: Protein MICRORCHIDIA 6 (663 aa).

Residues 1–77 (MSHDRSVNVS…PADDAGVTSS (77 aa)) form a disordered region. Over residues 49 to 62 (SVGQSAGQSSTSVV) the composition is skewed to polar residues. The Nuclear localization signal signature appears at 552 to 559 (KRKEHPDS). Positions 614–659 (DRKVRSQNLEVKAMNLRSELENYKSEYERLMVELQALDLVKDEHRR) form a coiled coil.

This sequence belongs to the MORC ATPase protein family. In terms of assembly, homodimer and heterodimers with MORC1/CRT1 and MORC2. Interacts directly with SUVH9. Component of an RNA-directed DNA methylation (RdDM) complex that contains at least MORC6, MORC1/CRT1, MORC2, SWI3D and SUVH9. Stimulated by interaction with DMS3. Interacts with IDN2, SWI3B, SWI3C and SWI3D. Requires Mg(2+) as cofactor. Mn(2+) is required as a cofactor.

The protein localises to the nucleus. Stimulated by DMS3. In terms of biological role, involved in RNA-directed DNA methylation (RdDM) as a component of the RdDM machinery and required for gene silencing. Together with SUVH2 and SUVH9, regulates the silencing of some transposable elements (TEs). Exhibits ATPase activity. May also be involved in the regulation of chromatin architecture/condensation to maintain gene silencing. Binds DNA/RNA in a non-specific manner and exhibits endonuclease activity. Probably involved in DNA repair. Positive regulator of defense against the oomycete Hyaloperonospora arabidopsidis (Hpa). The protein is Protein MICRORCHIDIA 6 of Arabidopsis thaliana (Mouse-ear cress).